Reading from the N-terminus, the 66-residue chain is Large ribosomal subunit protein uL29 (66 aa).

This sequence belongs to the universal ribosomal protein uL29 family.

This Borrelia recurrentis (strain A1) protein is Large ribosomal subunit protein uL29.